The primary structure comprises 238 residues: Orotidine 5'-phosphate decarboxylase (238 aa).

Residues Asp10, Lys32, 59-68, Thr122, Arg184, Gln193, Gly213, and Arg214 each bind substrate; that span reads DLKLHDIPNT. Lys61 (proton donor) is an active-site residue.

This sequence belongs to the OMP decarboxylase family. Type 1 subfamily. Homodimer.

It catalyses the reaction orotidine 5'-phosphate + H(+) = UMP + CO2. Its pathway is pyrimidine metabolism; UMP biosynthesis via de novo pathway; UMP from orotate: step 2/2. Its function is as follows. Catalyzes the decarboxylation of orotidine 5'-monophosphate (OMP) to uridine 5'-monophosphate (UMP). This Bacillus cytotoxicus (strain DSM 22905 / CIP 110041 / 391-98 / NVH 391-98) protein is Orotidine 5'-phosphate decarboxylase.